The chain runs to 545 residues: Glucose-6-phosphate isomerase (545 aa).

Catalysis depends on glutamate 351, which acts as the Proton donor. Residues histidine 382 and lysine 510 contribute to the active site.

The protein belongs to the GPI family.

Its subcellular location is the cytoplasm. It catalyses the reaction alpha-D-glucose 6-phosphate = beta-D-fructose 6-phosphate. It participates in carbohydrate biosynthesis; gluconeogenesis. The protein operates within carbohydrate degradation; glycolysis; D-glyceraldehyde 3-phosphate and glycerone phosphate from D-glucose: step 2/4. Its function is as follows. Catalyzes the reversible isomerization of glucose-6-phosphate to fructose-6-phosphate. In Shewanella frigidimarina (strain NCIMB 400), this protein is Glucose-6-phosphate isomerase.